The following is a 444-amino-acid chain: Argininosuccinate synthase (444 aa).

Residues 17-25 (AFSGGLDTS) and alanine 43 each bind ATP. Tyrosine 99 contacts L-citrulline. Residues glycine 129 and threonine 131 each coordinate ATP. Positions 131, 135, and 136 each coordinate L-aspartate. Residue asparagine 135 coordinates L-citrulline. Aspartate 136 contributes to the ATP binding site. Positions 139 and 192 each coordinate L-citrulline. Aspartate 194 provides a ligand contact to ATP. Positions 201, 203, and 280 each coordinate L-citrulline.

Belongs to the argininosuccinate synthase family. Type 2 subfamily. Homotetramer.

Its subcellular location is the cytoplasm. The enzyme catalyses L-citrulline + L-aspartate + ATP = 2-(N(omega)-L-arginino)succinate + AMP + diphosphate + H(+). The protein operates within amino-acid biosynthesis; L-arginine biosynthesis; L-arginine from L-ornithine and carbamoyl phosphate: step 2/3. This is Argininosuccinate synthase from Delftia acidovorans (strain DSM 14801 / SPH-1).